The primary structure comprises 550 residues: Cytochrome P450 monooxygenase hasH (550 aa).

A helical transmembrane segment spans residues 39–59 (IGVLASIVVLVTVVIGPKAVI). Heme is bound at residue C493.

It belongs to the cytochrome P450 family. It depends on heme as a cofactor.

It is found in the membrane. Its pathway is secondary metabolite biosynthesis. Functionally, cytochrome P450 monooxygenase; part of the gene cluster that mediates the biosynthesis of hexadehydro-astechrome (HAS), a tryptophan-derived iron(III)-complex that acts as a virulence factor in infected mice. Within the pathway, hasH, with the O-methyltransferase hasC and the FAD-linked oxidoreductase hasG, convert the hasE-prenylated Trp-Ala dipeptide into an O-methylated diketopiperazine that is then released from the hasD NRPS. The HAS biosynthesis begins with the synthesis of a tethered Trp-Ala dipeptide by the NRPS hasD. The 7-dimethylallyltryptophan synthase hasE then catalyzes the prenylation of the hasD-tethered tryptophan or the resulting tethered Trp-Ala dipeptide at the C-7 position of the indole moiety. HAS biosynthesis continues via tethered intermediates with the succesive action of the cytochrome P450 monooxygenase hasH, the O-methyltransferase hasC, and the FAD-linked oxidoreductase hasG. The resulting O-methylated diketopiperazine is then released from hasD. Finally, three O-methylated diketopiperazine molecules assemble in a trimeric complex with Fe(III) to produce hexadehydro-astechrome. This Aspergillus fumigatus (strain CBS 144.89 / FGSC A1163 / CEA10) (Neosartorya fumigata) protein is Cytochrome P450 monooxygenase hasH.